The sequence spans 612 residues: Vitamin B12 transporter BtuB (612 aa).

Residues 1–20 form the signal peptide; it reads MIKKSLLCTALSVTAFSGWA. The TonB box motif lies at 26–33; sequence DTLVVTAN. One can recognise a TBDR plug domain in the interval 38–152; that stretch reads PRSAVLAPIT…IGGVVNIITT (115 aa). Residues S85, N92, and 110–111 contribute to the cyanocob(III)alamin site; that span reads VS. Residues 155-612 form the TBDR beta-barrel domain; that stretch reads KPGTELTAGV…EYTLSGSYTF (458 aa). 3 beta stranded membrane passes run 158–165, 169–178, and 184–195; these read TELTAGVG, YQNYDVSTQQ, and TRVTLMGDYAYT. Ca(2+) is bound by residues D199, Q211, D213, and D215. A run of 2 beta stranded transmembrane segments spans residues 217–227 and 232–248; these read FLSKTLYGALE and DTWS…NRTN. Residues Y249, D250, and D261 each coordinate Ca(2+). Beta stranded transmembrane passes span 263–277, 279–296, 309–325, 328–337, 353–369, 371–381, 385–400, 403–417, 434–443, 449–458, 473–490, 494–509, 517–529, and 535–550; these read RKLY…LRFN, ELIQ…KDYN, TLDE…NSIV, HGNVGAGVDW, YDQR…QQLG, FTFEGAARSDD, FGRH…WEFI, YRFI…KAPN, QSKQWEGAFE, VNWRVSGYRN, YFNE…TANF, PLAH…SRNA, RRSK…QLDW, and DWGL…YDTD. Residue T309 participates in cyanocob(III)alamin binding. Residue R517 participates in cyanocob(III)alamin binding. Y551 serves as a coordination point for cyanocob(III)alamin. The next 3 membrane-spanning stretches (beta stranded) occupy residues 556–570, 583–594, and 600–612; these read PVKM…LAVS, IANRFDKDYETV, and AGRE…SYTF. The short motif at 595 to 612 is the TonB C-terminal box element; sequence YGYATAGREYTLSGSYTF.

It belongs to the TonB-dependent receptor family. BtuB (TC 1.B.14.3.1) subfamily.

Its subcellular location is the cell outer membrane. Functionally, involved in the active translocation of vitamin B12 (cyanocobalamin) across the outer membrane to the periplasmic space. It derives its energy for transport by interacting with the trans-periplasmic membrane protein TonB. This chain is Vitamin B12 transporter BtuB, found in Citrobacter freundii.